Reading from the N-terminus, the 890-residue chain is Translation initiation factor IF-2 (890 aa).

The tract at residues 45 to 304 (LIDHLNQKNS…LQQGFQKPAQ (260 aa)) is disordered. Residues 67-81 (STLNIPGTGGKSKSV) show a composition bias toward polar residues. Residues 92–217 (VKRDPQEAER…RMAEENKWTD (126 aa)) are compositionally biased toward basic and acidic residues. The segment covering 252–266 (GRGRNAKAARPKKGN) has biased composition (basic residues). Positions 267–280 (KHAESKADREEARA) are enriched in basic and acidic residues. One can recognise a tr-type G domain in the interval 389–558 (PRAPVVTIMG…LLQAEVLELK (170 aa)). Residues 398–405 (GHVDHGKT) are G1. 398-405 (GHVDHGKT) is a GTP binding site. The tract at residues 423-427 (GITQH) is G2. Positions 444 to 447 (DTPG) are G3. Residues 444–448 (DTPGH) and 498–501 (NKID) each bind GTP. The segment at 498 to 501 (NKID) is G4. Residues 534 to 536 (SAK) form a G5 region. The residue at position 808 (K808) is an N6-acetyllysine.

It belongs to the TRAFAC class translation factor GTPase superfamily. Classic translation factor GTPase family. IF-2 subfamily.

The protein localises to the cytoplasm. One of the essential components for the initiation of protein synthesis. Protects formylmethionyl-tRNA from spontaneous hydrolysis and promotes its binding to the 30S ribosomal subunits. Also involved in the hydrolysis of GTP during the formation of the 70S ribosomal complex. This Escherichia coli (strain 55989 / EAEC) protein is Translation initiation factor IF-2.